We begin with the raw amino-acid sequence, 306 residues long: Acetylglutamate kinase (306 aa).

Substrate-binding positions include 75–76 (GG), arginine 97, and asparagine 197.

The protein belongs to the acetylglutamate kinase family. ArgB subfamily.

Its subcellular location is the cytoplasm. It catalyses the reaction N-acetyl-L-glutamate + ATP = N-acetyl-L-glutamyl 5-phosphate + ADP. It functions in the pathway amino-acid biosynthesis; L-arginine biosynthesis; N(2)-acetyl-L-ornithine from L-glutamate: step 2/4. Its function is as follows. Catalyzes the ATP-dependent phosphorylation of N-acetyl-L-glutamate. The polypeptide is Acetylglutamate kinase (Streptomyces coelicolor (strain ATCC BAA-471 / A3(2) / M145)).